The following is a 1004-amino-acid chain: UPF0182 protein Mflv_4654 (1004 aa).

7 helical membrane passes run 18–38 (FLIA…RFID), 63–83 (LVIF…GLAL), 114–134 (LIGI…GQSY), 176–196 (FVGV…FGGI), 211–231 (IQLI…YWFD), 260–280 (KLIL…AIFL), and 288–308 (IGVV…PLVV). Low complexity predominate over residues 896 to 940 (PGADATATGPAATEPPAGQAPQTQGNNTAPPAAQPPNRQGQAPAG). A disordered region spans residues 896–960 (PGADATATGP…TGPTQLSAAK (65 aa)).

This sequence belongs to the UPF0182 family.

It is found in the cell membrane. This is UPF0182 protein Mflv_4654 from Mycolicibacterium gilvum (strain PYR-GCK) (Mycobacterium gilvum (strain PYR-GCK)).